The following is a 281-amino-acid chain: 4-diphosphocytidyl-2-C-methyl-D-erythritol kinase (281 aa).

The active site involves Lys11. 92-102 is an ATP binding site; sequence LVSAGLAGGSA. The active site involves Asp132.

Belongs to the GHMP kinase family. IspE subfamily.

It catalyses the reaction 4-CDP-2-C-methyl-D-erythritol + ATP = 4-CDP-2-C-methyl-D-erythritol 2-phosphate + ADP + H(+). Its pathway is isoprenoid biosynthesis; isopentenyl diphosphate biosynthesis via DXP pathway; isopentenyl diphosphate from 1-deoxy-D-xylulose 5-phosphate: step 3/6. Its function is as follows. Catalyzes the phosphorylation of the position 2 hydroxy group of 4-diphosphocytidyl-2C-methyl-D-erythritol. This is 4-diphosphocytidyl-2-C-methyl-D-erythritol kinase from Ehrlichia ruminantium (strain Gardel).